The chain runs to 216 residues: Ras-related protein RabN1 (216 aa).

Position 15–22 (15–22 (GDYNSGKT)) interacts with GTP. The short motif at 37–44 (TCPSTFDL) is the Effector region element. GTP contacts are provided by residues 62–66 (DTAGQ) and 128–131 (TKSD). The S-geranylgeranyl cysteine moiety is linked to residue Cys-216.

It belongs to the small GTPase superfamily. Rab family.

The protein localises to the cell membrane. In Dictyostelium discoideum (Social amoeba), this protein is Ras-related protein RabN1 (rabN1).